We begin with the raw amino-acid sequence, 205 residues long: N-(5'-phosphoribosyl)anthranilate isomerase (205 aa).

Belongs to the TrpF family.

It catalyses the reaction N-(5-phospho-beta-D-ribosyl)anthranilate = 1-(2-carboxyphenylamino)-1-deoxy-D-ribulose 5-phosphate. Its pathway is amino-acid biosynthesis; L-tryptophan biosynthesis; L-tryptophan from chorismate: step 3/5. The polypeptide is N-(5'-phosphoribosyl)anthranilate isomerase (Thiobacillus denitrificans (strain ATCC 25259 / T1)).